We begin with the raw amino-acid sequence, 623 residues long: NADPH-dependent diflavin oxidoreductase 1 (623 aa).

One can recognise a Flavodoxin-like domain in the interval 8-153 (LLVLYASQTG…TLDPWMLSLW (146 aa)). Residues 14–19 (SQTGNA), 62–65 (STTG), and Asp135 each bind FMN. Positions 221–467 (KPDCFLKMTR…SLPAPSQSLP (247 aa)) constitute an FAD-binding FR-type domain. Residues Arg369, 399-402 (RAFS), and 433-436 (GLCS) contribute to the FAD site. Residues Thr475, 541–542 (SR), 547–551 (KVYVQ), and Asp583 each bind NADP(+). Residue Trp622 coordinates FAD.

It belongs to the NADPH-dependent diflavin oxidoreductase NDOR1 family. The protein in the N-terminal section; belongs to the flavodoxin family. In the C-terminal section; belongs to the flavoprotein pyridine nucleotide cytochrome reductase family. As to quaternary structure, interacts with At5g18400. The cofactor is FAD. It depends on FMN as a cofactor. As to expression, widely expressed.

It localises to the cytoplasm. Its subcellular location is the nucleus. The enzyme catalyses 2 oxidized [2Fe-2S]-[protein] + NADPH = 2 reduced [2Fe-2S]-[protein] + NADP(+) + H(+). Functionally, NADPH-dependent reductase which is a central component of the cytosolic iron-sulfur (Fe-S) protein assembly (CIA) machinery. Transfers electrons from NADPH via its FAD and FMN prosthetic groups to the [2Fe-2S] cluster of the anamorsin/DRE2 homolog, another key component of the CIA machinery. In turn, this reduced cluster provides electrons for assembly of cytosolic iron-sulfur cluster proteins. Catalyzes the NADP-dependent reduction of cytochrome c, but not cytochrome P450 in vitro. Required for embryo development. The protein is NADPH-dependent diflavin oxidoreductase 1 (ATR3) of Arabidopsis thaliana (Mouse-ear cress).